Here is a 211-residue protein sequence, read N- to C-terminus: Cyclin-dependent kinase inhibitor 3 (211 aa).

Residues 1–20 (MKPPISIQASEFDSSDEEPV) are disordered. Residues 1–34 (MKPPISIQASEFDSSDEEPVDEEQTPIQISWLPL) form an interaction with CDK2 region. Positions 32–200 (LPLSRVNCSQ…FRDKLAAYLS (169 aa)) constitute a Tyrosine-protein phosphatase domain. Cys-140 (phosphocysteine intermediate) is an active-site residue.

This sequence belongs to the protein-tyrosine phosphatase family. As to quaternary structure, interacts with cyclin-dependent kinases such as CDK1, CDK2 and CDK3. Does not interact with CDK4. Interacts (via C-terminus) with phosphorylated CDK2 (via C-terminal helix). Interacts with MS4A3 (via C-terminus); the interaction enhances CDKN3 enzymatic activity.

It is found in the cytoplasm. The protein localises to the perinuclear region. The enzyme catalyses O-phospho-L-tyrosyl-[protein] + H2O = L-tyrosyl-[protein] + phosphate. It catalyses the reaction O-phospho-L-seryl-[protein] + H2O = L-seryl-[protein] + phosphate. It carries out the reaction O-phospho-L-threonyl-[protein] + H2O = L-threonyl-[protein] + phosphate. May play a role in cell cycle regulation. Dual specificity phosphatase active toward substrates containing either phosphotyrosine or phosphoserine residues. Dephosphorylates CDK2 at 'Thr-160' in a cyclin-dependent manner. In Mus musculus (Mouse), this protein is Cyclin-dependent kinase inhibitor 3.